Here is a 95-residue protein sequence, read N- to C-terminus: Ferredoxin-like protein FixX (95 aa).

Belongs to the bacterial-type ferredoxin family. FixX subfamily.

Functionally, could be part of an electron transfer system required for anaerobic carnitine reduction. Could be a 3Fe-4S cluster-containing protein. The sequence is that of Ferredoxin-like protein FixX (fixX) from Shigella flexneri.